The sequence spans 147 residues: Large ribosomal subunit protein uL13 (147 aa).

It belongs to the universal ribosomal protein uL13 family. In terms of assembly, part of the 50S ribosomal subunit.

Its function is as follows. This protein is one of the early assembly proteins of the 50S ribosomal subunit, although it is not seen to bind rRNA by itself. It is important during the early stages of 50S assembly. The protein is Large ribosomal subunit protein uL13 of Limosilactobacillus fermentum (strain NBRC 3956 / LMG 18251) (Lactobacillus fermentum).